We begin with the raw amino-acid sequence, 213 residues long: Holliday junction branch migration complex subunit RuvA (213 aa).

Residues 1–63 form a domain I region; that stretch reads MIGMLTGRVA…EDAFKLYGFL (63 aa). The domain II stretch occupies residues 64–142; sequence DDIDRAWFVH…PTGRSFSIGL (79 aa). Residues 143-160 are flexible linker; the sequence is PVHSDDGTTGGAPVAPAG. The interval 161–213 is domain III; that stretch reads GDSLAREDAVSALVNLGYNESQARQAVAKILRDADSEAPLGDVIRLSLKELAA.

This sequence belongs to the RuvA family. As to quaternary structure, homotetramer. Forms an RuvA(8)-RuvB(12)-Holliday junction (HJ) complex. HJ DNA is sandwiched between 2 RuvA tetramers; dsDNA enters through RuvA and exits via RuvB. An RuvB hexamer assembles on each DNA strand where it exits the tetramer. Each RuvB hexamer is contacted by two RuvA subunits (via domain III) on 2 adjacent RuvB subunits; this complex drives branch migration. In the full resolvosome a probable DNA-RuvA(4)-RuvB(12)-RuvC(2) complex forms which resolves the HJ.

The protein localises to the cytoplasm. In terms of biological role, the RuvA-RuvB-RuvC complex processes Holliday junction (HJ) DNA during genetic recombination and DNA repair, while the RuvA-RuvB complex plays an important role in the rescue of blocked DNA replication forks via replication fork reversal (RFR). RuvA specifically binds to HJ cruciform DNA, conferring on it an open structure. The RuvB hexamer acts as an ATP-dependent pump, pulling dsDNA into and through the RuvAB complex. HJ branch migration allows RuvC to scan DNA until it finds its consensus sequence, where it cleaves and resolves the cruciform DNA. In Maricaulis maris (strain MCS10) (Caulobacter maris), this protein is Holliday junction branch migration complex subunit RuvA.